The sequence spans 381 residues: Deoxyguanosinetriphosphate triphosphohydrolase-like protein (381 aa).

Positions 76–203 (RMTHTLEVAG…ADLSDEIAYT (128 aa)) constitute an HD domain.

Belongs to the dGTPase family. Type 2 subfamily.

The chain is Deoxyguanosinetriphosphate triphosphohydrolase-like protein from Leptospira borgpetersenii serovar Hardjo-bovis (strain JB197).